The sequence spans 178 residues: Protein SPEAR1 (178 aa).

Disordered stretches follow at residues 1–48 and 139–178; these read MGST…QRGL and HFLNEDPSSTTRRSKSLGSGIQHSGSSENQEVDLELRLSL. Low complexity predominate over residues 14-28; that stretch reads SSPPSSSPTSSSSSP. Positions 46-54 match the SPL motif; sequence RGLGVAQLE. Residues 144 to 167 are compositionally biased toward polar residues; that stretch reads DPSSTTRRSKSLGSGIQHSGSSEN. The EAR signature appears at 170-176; it reads VDLELRL.

In terms of assembly, interacts with SPL and SPEAR2. Not detected in leaves.

Adapter-like transcriptional repressor recruiting TPL/TPR corepressors to inhibit TCP transcription factors. This chain is Protein SPEAR1, found in Arabidopsis thaliana (Mouse-ear cress).